Here is a 194-residue protein sequence, read N- to C-terminus: Leucyl/phenylalanyl-tRNA--protein transferase (194 aa).

It belongs to the L/F-transferase family.

The protein resides in the cytoplasm. It carries out the reaction N-terminal L-lysyl-[protein] + L-leucyl-tRNA(Leu) = N-terminal L-leucyl-L-lysyl-[protein] + tRNA(Leu) + H(+). The enzyme catalyses N-terminal L-arginyl-[protein] + L-leucyl-tRNA(Leu) = N-terminal L-leucyl-L-arginyl-[protein] + tRNA(Leu) + H(+). It catalyses the reaction L-phenylalanyl-tRNA(Phe) + an N-terminal L-alpha-aminoacyl-[protein] = an N-terminal L-phenylalanyl-L-alpha-aminoacyl-[protein] + tRNA(Phe). Functions in the N-end rule pathway of protein degradation where it conjugates Leu, Phe and, less efficiently, Met from aminoacyl-tRNAs to the N-termini of proteins containing an N-terminal arginine or lysine. This is Leucyl/phenylalanyl-tRNA--protein transferase from Chlorobium limicola (strain DSM 245 / NBRC 103803 / 6330).